The chain runs to 170 residues: ATP synthase subunit b (170 aa).

The chain crosses the membrane as a helical span at residues 15–37 (FNLFETNILNWAVVIFGLYKFLP). Residues 72–98 (AKKDLSSAEEKASQIKADSLKRSESIR) are disordered.

It belongs to the ATPase B chain family. In terms of assembly, F-type ATPases have 2 components, F(1) - the catalytic core - and F(0) - the membrane proton channel. F(1) has five subunits: alpha(3), beta(3), gamma(1), delta(1), epsilon(1). F(0) has four main subunits: a(1), b(1), b'(1) and c(10-14). The alpha and beta chains form an alternating ring which encloses part of the gamma chain. F(1) is attached to F(0) by a central stalk formed by the gamma and epsilon chains, while a peripheral stalk is formed by the delta, b and b' chains.

It is found in the cellular thylakoid membrane. Functionally, f(1)F(0) ATP synthase produces ATP from ADP in the presence of a proton or sodium gradient. F-type ATPases consist of two structural domains, F(1) containing the extramembraneous catalytic core and F(0) containing the membrane proton channel, linked together by a central stalk and a peripheral stalk. During catalysis, ATP synthesis in the catalytic domain of F(1) is coupled via a rotary mechanism of the central stalk subunits to proton translocation. Component of the F(0) channel, it forms part of the peripheral stalk, linking F(1) to F(0). In Prochlorococcus marinus (strain MIT 9215), this protein is ATP synthase subunit b.